The chain runs to 1146 residues: Error-prone DNA polymerase (1146 aa).

Disordered regions lie at residues 1–43 (MGWG…WSRK) and 154–178 (ATPEFEHAAAPDSAPRTGEPDPPGP). A compositionally biased stretch (basic and acidic residues) spans 12–26 (ELERVLSGRPGRTDP).

Belongs to the DNA polymerase type-C family. DnaE2 subfamily.

It is found in the cytoplasm. It carries out the reaction DNA(n) + a 2'-deoxyribonucleoside 5'-triphosphate = DNA(n+1) + diphosphate. Its function is as follows. DNA polymerase involved in damage-induced mutagenesis and translesion synthesis (TLS). It is not the major replicative DNA polymerase. In Nocardia farcinica (strain IFM 10152), this protein is Error-prone DNA polymerase.